A 957-amino-acid polypeptide reads, in one-letter code: AP2-associated protein kinase 1 (957 aa).

Met1 is subject to N-acetylmethionine. Residues 1–11 (MKKFFDSRREQ) are compositionally biased toward basic and acidic residues. Residues 1 to 25 (MKKFFDSRREQGGSGLGSGSSGGGG) form a disordered region. Residues 12-25 (GGSGLGSGSSGGGG) are compositionally biased toward gly residues. Ser14 is modified (phosphoserine). The Protein kinase domain maps to 46 to 315 (VTVDEVLAEG…QVSYFSFKLL (270 aa)). Residues 52–60 (LAEGGFAIV) and Lys74 contribute to the ATP site. Asp176 (proton acceptor) is an active-site residue. Tyr234 carries the post-translational modification Phosphotyrosine. A Phosphoserine modification is found at Ser235. Disordered stretches follow at residues 326 to 506 (NSPI…AVHP) and 563 to 629 (TAAA…AGHR). Phosphothreonine occurs at positions 354 and 389. At Arg391 the chain carries Omega-N-methylarginine. Pro residues predominate over residues 436–448 (PQAPPTSQQPPSA). Residue Thr441 is modified to Phosphothreonine. Low complexity-rich tracts occupy residues 449–506 (PAQA…AVHP) and 563–601 (TAAAAPQPQAQPAAAASPAPAQEPAQIQAPVRQQPKVQT). Thr602 bears the Phosphothreonine mark. Over residues 607–617 (IQGQKLGSLTP) the composition is skewed to polar residues. Ser614 is modified (phosphoserine). Phosphothreonine is present on Thr616. Residues Ser619, Ser620, Ser633, and Ser646 each carry the phosphoserine modification. A Phosphothreonine modification is found at Thr649. The disordered stretch occupies residues 660 to 697 (SLNKSKSATTTPSGSPRASQQNVYNPSEGSTWNPFDDD). Residues 668–692 (TTTPSGSPRASQQNVYNPSEGSTWN) are compositionally biased toward polar residues. A Phosphotyrosine modification is found at Tyr683. A phosphoserine mark is found at Ser727, Ser842, Ser933, and Ser934. Residues 819-956 (EKADVAVESL…SLLLVDQLID (138 aa)) form a clathrin-binding domain (CBD) region. Disordered regions lie at residues 832 to 855 (LEPPVPQRLPSQTESVTSNRTDSL) and 919 to 941 (VLITKNPQGGHSRNSSGSSESSL). Residues 840–855 (LPSQTESVTSNRTDSL) show a composition bias toward polar residues. Positions 927–940 (GGHSRNSSGSSESS) are enriched in low complexity.

Belongs to the protein kinase superfamily. Ser/Thr protein kinase family. As to quaternary structure, interacts (via CBD domain) with clathrin. Interacts with AP-2 complex. Interacts with NUMB. Interacts with alpha-adaptin. Interacts with EPS15 isoform 2. Interacts with membrane-bound activated NOTCH1 but not with the inactive full-length form of NOTCH1. Preferentially interacts with monoubiquitinated activated NOTCH1 compared to the non-ubiquitinated form. In terms of processing, autophosphorylated. As to expression, detected in brain (at protein level).

The protein localises to the cell membrane. Its subcellular location is the membrane. The protein resides in the clathrin-coated pit. It is found in the presynapse. The catalysed reaction is L-seryl-[protein] + ATP = O-phospho-L-seryl-[protein] + ADP + H(+). It carries out the reaction L-threonyl-[protein] + ATP = O-phospho-L-threonyl-[protein] + ADP + H(+). Its activity is regulated as follows. Stimulated by clathrin. Its function is as follows. Regulates clathrin-mediated endocytosis by phosphorylating the AP2M1/mu2 subunit of the adaptor protein complex 2 (AP-2) which ensures high affinity binding of AP-2 to cargo membrane proteins during the initial stages of endocytosis. Preferentially, may phosphorylate substrates on threonine residues. Regulates phosphorylation of other AP-2 subunits as well as AP-2 localization and AP-2-mediated internalization of ligand complexes. Phosphorylates NUMB and regulates its cellular localization, promoting NUMB localization to endosomes. Binds to and stabilizes the activated form of NOTCH1, increases its localization in endosomes and regulates its transcriptional activity. The protein is AP2-associated protein kinase 1 (AAK1) of Bos taurus (Bovine).